The sequence spans 202 residues: Dephospho-CoA kinase (202 aa).

The DPCK domain occupies 5-202; sequence ILGLTGGIGS…FYLTLRGGQP (198 aa). An ATP-binding site is contributed by 13–18; that stretch reads GSGKSA.

The protein belongs to the CoaE family.

It is found in the cytoplasm. The catalysed reaction is 3'-dephospho-CoA + ATP = ADP + CoA + H(+). It functions in the pathway cofactor biosynthesis; coenzyme A biosynthesis; CoA from (R)-pantothenate: step 5/5. Functionally, catalyzes the phosphorylation of the 3'-hydroxyl group of dephosphocoenzyme A to form coenzyme A. The protein is Dephospho-CoA kinase of Stutzerimonas stutzeri (Pseudomonas stutzeri).